Consider the following 360-residue polypeptide: MKALILVGGYGTRLRPLTLTVPKPLVEFCNKPILLHQVEALVKAGVRHVILAVSYMSELLEREMRAQEQRLGIKISLSHEKEPLGTAGPLALARELLTDNQEPFFVLNSDVICDFPFDDMLKFHQQHGREGTIVVTKVEEPSKYGVVVYEGDSGRIHRFVEKPQVFVSNKINAGMYIFSPAMLRRIQLRPTSIEKEIFPVMAEEGQLYAMELQGFWMDIGQPKDFLTGMCMYLQSVRQQAPERLRAGPGFLGNVLVDPTAVIGQNCTIGPNVTIGAGVVLEDGVRVKRCTILKGAHIRSHSWLESCIVGWSSSVGQWVRMENVTVLGEDVIVNDELYINGANVLPHKSITDSVPEPRIIM.

Residues 2–222 (KALILVGGYG…QGFWMDIGQP (221 aa)) are substrate-binding domain. D110 serves as a coordination point for GDP-alpha-D-mannose. A Mg(2+)-binding site is contributed by D110. The active site involves K162. GDP-alpha-D-mannose is bound at residue D218. D218 contributes to the Mg(2+) binding site. A hexapeptide repeat domain region spans residues 245 to 360 (RAGPGFLGNV…DSVPEPRIIM (116 aa)).

The protein belongs to the transferase hexapeptide repeat family. As to quaternary structure, component of the GMPPA-GMPPB mannose-1-phosphate guanylyltransferase complex composed of 4 gmppa subunits and 8 gmppb subunits; the complex is organized into three layers, a central layer made up of 2 gmppa dimers sandwiched between two layers each made up of 2 gmppb dimers. Catalytic activity of gmppb is reduced when part of the complex and binding of GDP-alpha-D-Mannose by gmppa induces allosteric feedback inhibition of gmppb. Mg(2+) is required as a cofactor.

It carries out the reaction alpha-D-mannose 1-phosphate + GTP + H(+) = GDP-alpha-D-mannose + diphosphate. Its pathway is nucleotide-sugar biosynthesis; GDP-alpha-D-mannose biosynthesis; GDP-alpha-D-mannose from alpha-D-mannose 1-phosphate (GTP route): step 1/1. Its activity is regulated as follows. Enzyme activity is reduced by incorporation into the GMPPA-GMPPB mannose-1-phosphate guanylyltransferase complex. Allosterically inhibited, when part of the GMPPA-GMPPB complex, by GDP-alpha-D-mannose binding to GMPPA. Its function is as follows. Catalytic subunit of the GMPPA-GMPPB mannose-1-phosphate guanylyltransferase complex. Catalyzes the formation of GDP-mannose, an essential precursor of glycan moieties of glycoproteins and glycolipids. Can catalyze the reverse reaction in vitro. Together with GMPPA regulates GDP-alpha-D-mannose levels. The protein is Mannose-1-phosphate guanylyltransferase catalytic subunit beta (gmppb) of Danio rerio (Zebrafish).